A 930-amino-acid polypeptide reads, in one-letter code: Protocadherin gamma-B6 (930 aa).

Residues 1-30 (MGGSCAQRRRAGPRQVLFPLLLPFFYPTLC) form the signal peptide. Cadherin domains follow at residues 31-133 (EPIR…APQF), 134-242 (DKKE…PPVF), 243-347 (SRDE…SPEI), 348-452 (IITS…APVF), 453-562 (DQTS…APRV), and 570-675 (DGSA…LPDL). Topologically, residues 31-691 (EPIRYSIPEE…SDPQAELQFY (661 aa)) are extracellular. 3 N-linked (GlcNAc...) asparagine glycosylation sites follow: Asn-304, Asn-419, and Asn-545. Residues 692–712 (LVVALALISVLFLLAVILAIA) traverse the membrane as a helical segment. At 713–930 (LRLRRSLSPT…KKKSGKKEKK (218 aa)) the chain is on the cytoplasmic side. 2 disordered regions span residues 791–839 (PHGG…WPNN) and 900–930 (ATLT…KEKK). Residues 800-839 (HPETLTSQAPPNTDWRFSQAQRPGTSGSQNGDDTGTWPNN) show a composition bias toward polar residues. The segment covering 920 to 930 (NKKKSGKKEKK) has biased composition (basic residues).

Its subcellular location is the cell membrane. Potential calcium-dependent cell-adhesion protein. May be involved in the establishment and maintenance of specific neuronal connections in the brain. This chain is Protocadherin gamma-B6 (PCDHGB6), found in Pan troglodytes (Chimpanzee).